The following is a 420-amino-acid chain: Protein ECERIFERUM 26-like (420 aa).

Belongs to the plant acyltransferase family. Highly expressed in flowers. Expressed in leaves.

Involved in biosynthesis of the epicuticular wax. Plays a role in very-long-chain fatty acid (VLCFA) biosynthesis and is required for VLCFA elongation in leaf. Despite its classification as a BAHD acyltransferase based on sequence homology, CER26L does not seem to share the catalytic mechanism of the members of the BAHD family. The protein is Protein ECERIFERUM 26-like (CER26L) of Arabidopsis thaliana (Mouse-ear cress).